The following is an 856-amino-acid chain: Dual specificity protein kinase TTK (856 aa).

An N-acetylmethionine modification is found at M1. S7 carries the phosphoserine modification. T33 carries the post-translational modification Phosphothreonine. S37, S80, S281, S317, and S321 each carry phosphoserine. Residue T360 is modified to Phosphothreonine. A Phosphoserine modification is found at S363. Positions E369–K392 are disordered. S393, S435, and S454 each carry phosphoserine. Positions Y524 to V790 constitute a Protein kinase domain. Residues I530–V538 and K552 each bind ATP. The active-site Proton acceptor is D646. Position 820 is a phosphoserine (S820). Low complexity predominate over residues Y835–S846. The interval Y835–K856 is disordered.

It belongs to the protein kinase superfamily. Ser/Thr protein kinase family. Interacts with TPR; the interactions occurs in a microtubule-independent manner. Interacts with MAD1L1 and MAD2L1.

It catalyses the reaction L-seryl-[protein] + ATP = O-phospho-L-seryl-[protein] + ADP + H(+). The catalysed reaction is L-threonyl-[protein] + ATP = O-phospho-L-threonyl-[protein] + ADP + H(+). The enzyme catalyses L-tyrosyl-[protein] + ATP = O-phospho-L-tyrosyl-[protein] + ADP + H(+). With respect to regulation, inhibited by the ATP-competitive kinase inhibitor, SP600125. In terms of biological role, involved in mitotic spindle assembly checkpoint signaling, a process that delays anaphase until chromosomes are bioriented on the spindle, and in the repair of incorrect mitotic kinetochore-spindle microtubule attachments. Phosphorylates MAD1L1 to promote the mitotic spindle assembly checkpoint. Phosphorylates CDCA8/Borealin leading to enhanced AURKB activity at the kinetochore. Phosphorylates SKA3 at 'Ser-34' leading to dissociation of the SKA complex from microtubules and destabilization of microtubule-kinetochore attachments. Phosphorylates KNL1, KNTC1 and autophosphorylates. Phosphorylates MCRS1 which enhances recruitment of KIF2A to the minus end of spindle microtubules and promotes chromosome alignment. The protein is Dual specificity protein kinase TTK (TTK) of Macaca fascicularis (Crab-eating macaque).